Reading from the N-terminus, the 195-residue chain is MRLLLLLLVAASAVVRSDASANLGGVPGKRLKMQYATGPLLKFQICVSUGYRRVFEEYMRVISQRYPDIRIEGENYLPQPIYRHIASFLSVFKLVLIGLIIVGKDPFAFFGMQAPSIWQWGQENKVYACMMVFFLSNMIENQCMSTGAFEITLNDVPVWSKLESGHLPSMQQLVQILDNEMKLNVHMDSIPHHRS.

A signal peptide spans 1 to 19 (MRLLLLLLVAASAVVRSDA). The segment at residues 46 to 49 (CVSU) is a cross-link (cysteinyl-selenocysteine (Cys-Sec)). U49 is a non-standard amino acid (selenocysteine). The chain crosses the membrane as a helical span at residues 85–103 (IASFLSVFKLVLIGLIIVG).

Belongs to the SelWTH family. Selenoprotein T subfamily. In terms of processing, may contain a selenide-sulfide bond between Cys-46 and Sec-49. This bond is speculated to serve as redox-active pair.

Its subcellular location is the endoplasmic reticulum membrane. The enzyme catalyses [thioredoxin]-dithiol + NADP(+) = [thioredoxin]-disulfide + NADPH + H(+). In terms of biological role, selenoprotein with thioredoxin reductase-like oxidoreductase activity. Protects dopaminergic neurons against oxidative stress and cell death. Involved in ADCYAP1/PACAP-induced calcium mobilization and neuroendocrine secretion. Plays a role in fibroblast anchorage and redox regulation. In gastric smooth muscle, modulates the contraction processes through the regulation of calcium release and MYLK activation. In pancreatic islets, involved in the control of glucose homeostasis, contributes to prolonged ADCYAP1/PACAP-induced insulin secretion. This is Thioredoxin reductase-like selenoprotein T from Bos taurus (Bovine).